The primary structure comprises 152 residues: Large ribosomal subunit protein uL11 (152 aa).

It belongs to the universal ribosomal protein uL11 family. In terms of assembly, part of the ribosomal stalk of the 50S ribosomal subunit. Interacts with L10 and the large rRNA to form the base of the stalk. L10 forms an elongated spine to which L12 dimers bind in a sequential fashion forming a multimeric L10(L12)X complex. In terms of processing, one or more lysine residues are methylated.

Forms part of the ribosomal stalk which helps the ribosome interact with GTP-bound translation factors. The chain is Large ribosomal subunit protein uL11 from Mycoplasmoides gallisepticum (strain R(low / passage 15 / clone 2)) (Mycoplasma gallisepticum).